A 126-amino-acid chain; its full sequence is MNYNDPLEPAMIITKVLSKSDIVGNVVLPKAEVMSVLTRMNVNDQDLLNGVEVQVDDIMEDDLYTVTLKVSGIDKPKYYFGTGWSTMKHSLDLSEGDVLKLYWSHLDNKFVVLNFQYSVLPLMIPV.

A DNA-binding region (TF-B3) is located at residues 20–118; it reads SDIVGNVVLP…KFVVLNFQYS (99 aa).

The protein resides in the nucleus. The chain is B3 domain-containing protein At5g54067 from Arabidopsis thaliana (Mouse-ear cress).